The following is a 209-amino-acid chain: Uracil phosphoribosyltransferase (209 aa).

5-phospho-alpha-D-ribose 1-diphosphate contacts are provided by residues Arg79, Arg104, and 131–139 (DPMLATGGS). Uracil contacts are provided by residues Ile194 and 199–201 (GDA). Asp200 provides a ligand contact to 5-phospho-alpha-D-ribose 1-diphosphate.

Belongs to the UPRTase family. It depends on Mg(2+) as a cofactor.

It catalyses the reaction UMP + diphosphate = 5-phospho-alpha-D-ribose 1-diphosphate + uracil. The protein operates within pyrimidine metabolism; UMP biosynthesis via salvage pathway; UMP from uracil: step 1/1. Allosterically activated by GTP. In terms of biological role, catalyzes the conversion of uracil and 5-phospho-alpha-D-ribose 1-diphosphate (PRPP) to UMP and diphosphate. This chain is Uracil phosphoribosyltransferase, found in Geobacillus sp. (strain WCH70).